Reading from the N-terminus, the 203-residue chain is Thymidylate kinase (203 aa).

7-14 (GPDGSGKS) lines the ATP pocket.

This sequence belongs to the thymidylate kinase family.

It catalyses the reaction dTMP + ATP = dTDP + ADP. Functionally, phosphorylation of dTMP to form dTDP in both de novo and salvage pathways of dTTP synthesis. The sequence is that of Thymidylate kinase from Finegoldia magna (strain ATCC 29328 / DSM 20472 / WAL 2508) (Peptostreptococcus magnus).